The primary structure comprises 355 residues: UDP-3-O-acylglucosamine N-acyltransferase (355 aa).

Catalysis depends on histidine 252, which acts as the Proton acceptor.

Belongs to the transferase hexapeptide repeat family. LpxD subfamily. Homotrimer.

It catalyses the reaction a UDP-3-O-[(3R)-3-hydroxyacyl]-alpha-D-glucosamine + a (3R)-hydroxyacyl-[ACP] = a UDP-2-N,3-O-bis[(3R)-3-hydroxyacyl]-alpha-D-glucosamine + holo-[ACP] + H(+). Its pathway is bacterial outer membrane biogenesis; LPS lipid A biosynthesis. Functionally, catalyzes the N-acylation of UDP-3-O-acylglucosamine using 3-hydroxyacyl-ACP as the acyl donor. Is involved in the biosynthesis of lipid A, a phosphorylated glycolipid that anchors the lipopolysaccharide to the outer membrane of the cell. The protein is UDP-3-O-acylglucosamine N-acyltransferase of Polynucleobacter necessarius subsp. necessarius (strain STIR1).